Reading from the N-terminus, the 227-residue chain is Ornithine decarboxylase antizyme 1 (227 aa).

This sequence belongs to the ODC antizyme family. In terms of assembly, interacts with ODC1 and thereby sterically blocks ODC homodimerization. Forms a ternary complex with PSMB4 and OAZ1 before PSMB4 is incorporated into the 20S proteasome. Interacts with AZIN2; this interaction disrupts the interaction between the antizyme and ODC1. Interacts with FAM171A1.

Its function is as follows. Ornithine decarboxylase (ODC) antizyme protein that negatively regulates ODC activity and intracellular polyamine biosynthesis and uptake in response to increased intracellular polyamine levels. Binds to ODC monomers, inhibiting the assembly of the functional ODC homodimer, and targets the monomers for ubiquitin-independent proteolytic destruction by the 26S proteasome. Triggers ODC degradation by inducing the exposure of a cryptic proteasome-interacting surface of ODC. Stabilizes AZIN2 by interfering with its ubiquitination. Also inhibits cellular uptake of polyamines by inactivating the polyamine uptake transporter. SMAD1/OAZ1/PSMB4 complex mediates the degradation of the CREBBP/EP300 repressor SNIP1. Involved in the translocation of AZIN2 from ER-Golgi intermediate compartment (ERGIC) to the cytosol. The polypeptide is Ornithine decarboxylase antizyme 1 (Oaz1) (Rattus norvegicus (Rat)).